The primary structure comprises 122 residues: Large ribosomal subunit protein bL19 (122 aa).

Belongs to the bacterial ribosomal protein bL19 family.

Its function is as follows. This protein is located at the 30S-50S ribosomal subunit interface and may play a role in the structure and function of the aminoacyl-tRNA binding site. In Prosthecochloris aestuarii (strain DSM 271 / SK 413), this protein is Large ribosomal subunit protein bL19.